Consider the following 97-residue polypeptide: Co-chaperonin GroES (97 aa).

It belongs to the GroES chaperonin family. In terms of assembly, heptamer of 7 subunits arranged in a ring. Interacts with the chaperonin GroEL.

Its subcellular location is the cytoplasm. Its function is as follows. Together with the chaperonin GroEL, plays an essential role in assisting protein folding. The GroEL-GroES system forms a nano-cage that allows encapsulation of the non-native substrate proteins and provides a physical environment optimized to promote and accelerate protein folding. GroES binds to the apical surface of the GroEL ring, thereby capping the opening of the GroEL channel. The sequence is that of Co-chaperonin GroES from Ectopseudomonas mendocina (strain ymp) (Pseudomonas mendocina).